The chain runs to 329 residues: Ketol-acid reductoisomerase (NADP(+)) (329 aa).

Positions 2 to 181 (MKKYYESDAD…GATRAVVLET (180 aa)) constitute a KARI N-terminal Rossmann domain. Residues 25 to 28 (YGSQ), arginine 48, serine 52, and 82 to 85 (DELQ) each bind NADP(+). Residue histidine 107 is part of the active site. Glycine 133 provides a ligand contact to NADP(+). In terms of domain architecture, KARI C-terminal knotted spans 182–327 (TFREETETDL…KEVRAMMPQF (146 aa)). Mg(2+) is bound by residues aspartate 190, glutamate 194, glutamate 226, and glutamate 230. Serine 251 contributes to the substrate binding site.

Belongs to the ketol-acid reductoisomerase family. It depends on Mg(2+) as a cofactor.

It carries out the reaction (2R)-2,3-dihydroxy-3-methylbutanoate + NADP(+) = (2S)-2-acetolactate + NADPH + H(+). The enzyme catalyses (2R,3R)-2,3-dihydroxy-3-methylpentanoate + NADP(+) = (S)-2-ethyl-2-hydroxy-3-oxobutanoate + NADPH + H(+). Its pathway is amino-acid biosynthesis; L-isoleucine biosynthesis; L-isoleucine from 2-oxobutanoate: step 2/4. It participates in amino-acid biosynthesis; L-valine biosynthesis; L-valine from pyruvate: step 2/4. Functionally, involved in the biosynthesis of branched-chain amino acids (BCAA). Catalyzes an alkyl-migration followed by a ketol-acid reduction of (S)-2-acetolactate (S2AL) to yield (R)-2,3-dihydroxy-isovalerate. In the isomerase reaction, S2AL is rearranged via a Mg-dependent methyl migration to produce 3-hydroxy-3-methyl-2-ketobutyrate (HMKB). In the reductase reaction, this 2-ketoacid undergoes a metal-dependent reduction by NADPH to yield (R)-2,3-dihydroxy-isovalerate. In Methanoregula boonei (strain DSM 21154 / JCM 14090 / 6A8), this protein is Ketol-acid reductoisomerase (NADP(+)).